The primary structure comprises 155 residues: 6,7-dimethyl-8-ribityllumazine synthase (155 aa).

5-amino-6-(D-ribitylamino)uracil-binding positions include Trp-23, 57–59 (AWE), and 81–83 (CVI). 86–87 (DT) contributes to the (2S)-2-hydroxy-3-oxobutyl phosphate binding site. The active-site Proton donor is the His-89. Asn-114 is a binding site for 5-amino-6-(D-ribitylamino)uracil. Residue Arg-128 participates in (2S)-2-hydroxy-3-oxobutyl phosphate binding.

Belongs to the DMRL synthase family. As to quaternary structure, forms an icosahedral capsid composed of 60 subunits, arranged as a dodecamer of pentamers.

It carries out the reaction (2S)-2-hydroxy-3-oxobutyl phosphate + 5-amino-6-(D-ribitylamino)uracil = 6,7-dimethyl-8-(1-D-ribityl)lumazine + phosphate + 2 H2O + H(+). It participates in cofactor biosynthesis; riboflavin biosynthesis; riboflavin from 2-hydroxy-3-oxobutyl phosphate and 5-amino-6-(D-ribitylamino)uracil: step 1/2. In terms of biological role, catalyzes the formation of 6,7-dimethyl-8-ribityllumazine by condensation of 5-amino-6-(D-ribitylamino)uracil with 3,4-dihydroxy-2-butanone 4-phosphate. This is the penultimate step in the biosynthesis of riboflavin. This Stenotrophomonas maltophilia (strain K279a) protein is 6,7-dimethyl-8-ribityllumazine synthase.